The sequence spans 633 residues: Extracellular metalloproteinase mep (633 aa).

The first 18 residues, 1 to 18 (MRLLSLAGAMALPLCVLA), serve as a signal peptide directing secretion. The propeptide occupies 19-244 (HPTHRTRGIA…IHGVVDYISD (226 aa)). Asn326 carries an N-linked (GlcNAc...) asparagine glycan. Residue His428 participates in Zn(2+) binding. The active site involves Glu429. His432 contributes to the Zn(2+) binding site. N-linked (GlcNAc...) asparagine glycosylation is present at Asn514.

It belongs to the peptidase M36 family. Requires Zn(2+) as cofactor.

The protein localises to the secreted. Secreted metalloproteinase that allows assimilation of proteinaceous substrates. This Aspergillus terreus (strain NIH 2624 / FGSC A1156) protein is Extracellular metalloproteinase mep (mep).